We begin with the raw amino-acid sequence, 221 residues long: Small ribosomal subunit protein uS3 (221 aa).

Positions 39-108 (IRKFVKKRSY…NVIINIVEVK (70 aa)) constitute a KH type-2 domain.

It belongs to the universal ribosomal protein uS3 family. As to quaternary structure, part of the 30S ribosomal subunit. Forms a tight complex with proteins S10 and S14.

Functionally, binds the lower part of the 30S subunit head. Binds mRNA in the 70S ribosome, positioning it for translation. The chain is Small ribosomal subunit protein uS3 from Clostridium novyi (strain NT).